We begin with the raw amino-acid sequence, 29 residues long: GWTLNSAGYLLGPHAVDNHRSLNDKHGLA.

Ala29 is modified (alanine amide).

It belongs to the galanin family.

The protein resides in the secreted. In terms of biological role, contracts smooth muscle of the gastrointestinal and genitourinary tract, regulates growth hormone release, modulates insulin release, and may be involved in the control of adrenal secretion. The polypeptide is Galanin (gal) (Amia calva (Bowfin)).